The chain runs to 91 residues: Early E3B 10.4 kDa protein (91 aa).

A signal peptide spans 1-22; that stretch reads MIPRNFFFTILICPFNVCATFT. Topologically, residues 23–34 are lumenal; sequence AVATASPDCIGP. A helical membrane pass occupies residues 35-60; it reads FASYALFAFVTCICVCSIVCLVINFF. At 61–91 the chain is on the cytoplasmic side; that stretch reads QLVDWIFVRIAYLRHHPEYRNQNVAALLRLI.

The protein belongs to the adenoviridae E3B family.

The protein resides in the host endoplasmic reticulum membrane. Functionally, down-regulates the EGF receptor. The polypeptide is Early E3B 10.4 kDa protein (Human adenovirus B serotype 3 (HAdV-3)).